A 357-amino-acid chain; its full sequence is DNA integrity scanning protein DisA (357 aa).

A DAC domain is found at 8 to 146 (VKSMINILQL…GNLRYTLKDI (139 aa)). ATP-binding positions include G75, L93, and 106–110 (MRHRT).

It belongs to the DisA family. As to quaternary structure, homooctamer. Mg(2+) serves as cofactor.

The enzyme catalyses 2 ATP = 3',3'-c-di-AMP + 2 diphosphate. In terms of biological role, participates in a DNA-damage check-point that is active prior to asymmetric division when DNA is damaged. DisA forms globular foci that rapidly scan along the chromosomes during sporulation, searching for lesions. When a lesion is present, DisA pauses at the lesion site. This triggers a cellular response that culminates in a temporary block in sporulation initiation. Its function is as follows. Also has diadenylate cyclase activity, catalyzing the condensation of 2 ATP molecules into cyclic di-AMP (c-di-AMP). c-di-AMP acts as a signaling molecule that couples DNA integrity with progression of sporulation. The rise in c-di-AMP level generated by DisA while scanning the chromosome, operates as a positive signal that advances sporulation; upon encountering a lesion, the DisA focus arrests at the damaged site and halts c-di-AMP synthesis. The sequence is that of DNA integrity scanning protein DisA from Bacillus cereus (strain AH187).